Here is a 111-residue protein sequence, read N- to C-terminus: Probable monothiol glutaredoxin 2 (111 aa).

Residues 7 to 109 (LKFIQNAIKK…KMLKDETKLI (103 aa)) enclose the Glutaredoxin domain. Glutathione is bound at residue Lys-24. Cys-32 serves as a coordination point for [2Fe-2S] cluster. Glutathione-binding positions include Arg-61, Phe-73, and 86 to 87 (CD).

It belongs to the glutaredoxin family. Monothiol subfamily.

The sequence is that of Probable monothiol glutaredoxin 2 (grxC2) from Rickettsia typhi (strain ATCC VR-144 / Wilmington).